The chain runs to 147 residues: Small ribosomal subunit protein uS12 (147 aa).

It belongs to the universal ribosomal protein uS12 family. As to quaternary structure, part of the 30S ribosomal subunit.

In terms of biological role, with S4 and S5 plays an important role in translational accuracy. Located at the interface of the 30S and 50S subunits. This Thermococcus kodakarensis (strain ATCC BAA-918 / JCM 12380 / KOD1) (Pyrococcus kodakaraensis (strain KOD1)) protein is Small ribosomal subunit protein uS12.